Reading from the N-terminus, the 1657-residue chain is Androglobin (1657 aa).

Over residues 1 to 11 (MASKQAKRKEV) the composition is skewed to basic residues. Disordered stretches follow at residues 1-40 (MASKQAKRKEVHRINSAHGSDKSKDLYHFGSNVPPGSFEQ) and 321-398 (TKEN…SSDV). The 333-residue stretch at 70 to 402 (KDKTAKSPIF…RPSSDVQYSM (333 aa)) folds into the Calpain catalytic domain. Residues 321–386 (TKENKDGKDG…DGEKEKEKFK (66 aa)) show a composition bias toward basic and acidic residues. The 128-residue stretch at 762–889 (HVCSMTTFVI…EDVSLAEWVD (128 aa)) folds into the Globin; C-terminal part domain. Gln791 and His823 together coordinate heme b. Residues 905-934 (EIAAAVKIQSMWKGCYVRLLMKARKPETKE) form the IQ domain. One can recognise a Globin; N-terminal part domain in the interval 935–967 (NVTVADTLQKIWAVLEMNLEQYALSLLRLMFKS). 4 disordered regions span residues 1184-1226 (SKQV…TDTG), 1288-1356 (KHEE…QEDP), 1422-1459 (TTDTTTSAPSPETLSVSQSQTKSSEEGELDTGKYADIK), and 1638-1657 (IEKKSPASDSQKKKKVGKKK). Residues 1321 to 1336 (EKSAEKEKLAKEKQAP) show a composition bias toward basic and acidic residues. 2 stretches are compositionally biased toward polar residues: residues 1341–1351 (QQVQMPTAVHS) and 1422–1443 (TTDTTTSAPSPETLSVSQSQTK). Positions 1585-1640 (DEVLEMYGEMRDSVDEARQKILDIREVYRNKLLEAERLRMEALAAQEAAVKIEIEK) form a coiled coil.

The protein in the central section; belongs to the globin family. This sequence in the N-terminal section; belongs to the peptidase C2 family. As to quaternary structure, interacts with septin SEPT10; contributes to in vitro proteolytic cleavage of SEPT10 in a calmodulin-dependent manner. Interacts with CFAP69. Interacts with SPEF2. May interact with calmodulin. As to expression, strongly expressed in testis and lung. Weakly expressed in heart, brain, spleen, kidney and tongue.

It is found in the cell projection. It localises to the cilium. The protein localises to the flagellum. Its function is as follows. Probable chimeric globin with a bis-histidyl six-coordinate heme-iron atom through which it could bind dioxygen, carbon monoxide and nitric oxide. Required for sperm flagellum formation and maturation of elongating spermatids, thus playing an essential role in male fertility. The chain is Androglobin from Mus musculus (Mouse).